The primary structure comprises 623 residues: MPSTKNANGEGHFPSRIKQFFRINSGSKDHKDRDAHTTSSSHGGAPRADAKTPSGFRQSRFFSVGRLRSTTVVSEGNPLDESMSPTAHANPYFAHQGQPGLRHHNDGSVPPSPPDTPSLKVDGPEGSQQPTAATKEELARKLRRVASAPNAQGLFSKGQGNGDRPATAELSKEPLEESKDSNTVGFAEQKPNNDSSTSLAAPDADGLGALPPPIRQSPLAFRRTYSSNSIKVRNVEVGPQSFDKIKLIGKGDVGKVYLVKEKKSGRLYAMKVLSKKEMIKRNKIKRALAEQEILATSNHPFIVTLYHSFQSEDYLYLCMEYCSGGEFFRALQTRPGKCIPEDDARFYAAEVTAALEYLHLMGFIYRDLKPENILLHQSGHIMLSDFDLSKQSDPGGKPTMIIGKNGTSTSSLPTIDTKSCIANFRTNSFVGTEEYIAPEVIKGSGHTSAVDWWTLGILIYEMLYGTTPFKGKNRNATFANILREDIPFPDHAGAPQISNLCKSLIRKLLIKDENRRLGARAGASDIKTHPFFRTTQWALIRHMKPPIVPNQGRGIDTLNFRNVKESESVDISGSRQMGLKGEPLESGMVTPGENAVDPFEEFNSVTLHHDGDEEYHSDAYEKR.

The tract at residues 1-215 (MPSTKNANGE…GLGALPPPIR (215 aa)) is disordered. Composition is skewed to basic and acidic residues over residues 27 to 36 (SKDHKDRDAH) and 170 to 180 (LSKEPLEESKD). The span at 199–209 (LAAPDADGLGA) shows a compositional bias: low complexity. Residues 242 to 532 (FDKIKLIGKG…ASDIKTHPFF (291 aa)) enclose the Protein kinase domain. Residues 248 to 256 (IGKGDVGKV) and lysine 271 each bind ATP. Aspartate 367 acts as the Proton acceptor in catalysis. The segment at 569-596 (VDISGSRQMGLKGEPLESGMVTPGENAV) is disordered.

This sequence belongs to the protein kinase superfamily. Ser/Thr protein kinase family. KIN82 subfamily.

The catalysed reaction is L-seryl-[protein] + ATP = O-phospho-L-seryl-[protein] + ADP + H(+). It catalyses the reaction L-threonyl-[protein] + ATP = O-phospho-L-threonyl-[protein] + ADP + H(+). Controls entry of the cell into the asexual developmental program. Required to repress entry into the conidiation program. The sequence is that of Serine/threonine-protein kinase nrc-2 (nrc-2) from Neurospora crassa (strain ATCC 24698 / 74-OR23-1A / CBS 708.71 / DSM 1257 / FGSC 987).